The following is a 653-amino-acid chain: MGKVIGIDLGTTNSCVAVLEGGQPIVIANSEGGRTTPSIVGFGKSGDRLVGQLAKRQAVTNAENTIFSIKRFIGRRWEDTETERDRVPYGCVKGRDDTVDVQIRGRNYTPQEISAMILQKLKQDAENFLGEAVTQAVITVPAYFTDAQRQATKDAGTIAGLEVLRIINEPTAAALAFGLEKQDQEQLILVFDLGGGTFDVSILQLGDGVFEVKATSGNNQLGGDDFDGCVVCWMIERFQQQEKIDLAQDKMALQRLREAAEKAKIELSSMASTSINLPFITADETGPKHLEMELSRSKFEELVGQLIEATIQPMIQALKDADLKPQDIDKIILVGGSTRIPAVQNALIKFFNGKAPDRSVNPDEAVALGAAIQAGVLGGEVDNLLLLDVTPLSLGIETLGEVFTKIIERNTTIPTSKSQIFSTAVDGQTSVEIHILQGERTMARDNKSLGKFLLAGIPPASRGVPQIEVSFEIDVNGILKVAAQDKGTGREQSIRITNTGGLSTNEVERMRQEAEVFAEEDRRRKELVELKNQADNLLIIYESTLKDNGDLIGEQIKVLANEKVAQIQSVMTNPAISLKEFQQCLDDFQQTLFSIGANVYQRANTQTDDELEVMSDGSSPSDIEHPISGTLIPQFNFDFDDESTAQADYEAID.

A Phosphothreonine; by autocatalysis modification is found at Thr-197.

The protein belongs to the heat shock protein 70 family.

Its function is as follows. Acts as a chaperone. The protein is Chaperone protein dnaK3 (dnaK3) of Nostoc sp. (strain PCC 7120 / SAG 25.82 / UTEX 2576).